A 416-amino-acid chain; its full sequence is Type II methyltransferase M.PspPI (416 aa).

In terms of domain architecture, SAM-dependent MTase C5-type spans 77–410 (YSLVELFAGA…KAIIRMLNAA (334 aa)). The active site involves cysteine 149.

Belongs to the class I-like SAM-binding methyltransferase superfamily. C5-methyltransferase family.

It catalyses the reaction a 2'-deoxycytidine in DNA + S-adenosyl-L-methionine = a 5-methyl-2'-deoxycytidine in DNA + S-adenosyl-L-homocysteine + H(+). Functionally, a methylase, recognizes the double-stranded sequence 5'-GGNCC-3', methylates C-4 on both strands, and protects the DNA from cleavage by the PspPI endonuclease. The chain is Type II methyltransferase M.PspPI from Psychrobacter sp. (strain TA137).